The primary structure comprises 367 residues: Putative S-adenosyl-L-methionine-dependent methyltransferase MT0751 (367 aa).

S-adenosyl-L-methionine is bound by residues aspartate 137 and 166-167 (DL). Polar residues predominate over residues 348 to 358 (TRSDAHQASTT). Residues 348–367 (TRSDAHQASTTAPPPPGLTG) are disordered.

The protein belongs to the UPF0677 family.

Its function is as follows. Exhibits S-adenosyl-L-methionine-dependent methyltransferase activity. This is Putative S-adenosyl-L-methionine-dependent methyltransferase MT0751 from Mycobacterium tuberculosis (strain CDC 1551 / Oshkosh).